The chain runs to 434 residues: Methylenetetrahydrofolate--tRNA-(uracil-5-)-methyltransferase TrmFO (434 aa).

10–15 (GAGLAG) is a binding site for FAD.

This sequence belongs to the MnmG family. TrmFO subfamily. The cofactor is FAD.

It is found in the cytoplasm. The catalysed reaction is uridine(54) in tRNA + (6R)-5,10-methylene-5,6,7,8-tetrahydrofolate + NADH + H(+) = 5-methyluridine(54) in tRNA + (6S)-5,6,7,8-tetrahydrofolate + NAD(+). It carries out the reaction uridine(54) in tRNA + (6R)-5,10-methylene-5,6,7,8-tetrahydrofolate + NADPH + H(+) = 5-methyluridine(54) in tRNA + (6S)-5,6,7,8-tetrahydrofolate + NADP(+). Catalyzes the folate-dependent formation of 5-methyl-uridine at position 54 (M-5-U54) in all tRNAs. The polypeptide is Methylenetetrahydrofolate--tRNA-(uracil-5-)-methyltransferase TrmFO (Bacillus cereus (strain ATCC 10987 / NRS 248)).